The primary structure comprises 313 residues: Ribosomal RNA small subunit methyltransferase H (313 aa).

S-adenosyl-L-methionine contacts are provided by residues 48 to 50 (GGH), Asp-68, Phe-102, Asp-120, and Gln-127. Residues 290–313 (TATEEEIDRNPRSRSAKLRAAARK) are disordered. Over residues 301–313 (RSRSAKLRAAARK) the composition is skewed to basic residues.

Belongs to the methyltransferase superfamily. RsmH family.

The protein localises to the cytoplasm. It carries out the reaction cytidine(1402) in 16S rRNA + S-adenosyl-L-methionine = N(4)-methylcytidine(1402) in 16S rRNA + S-adenosyl-L-homocysteine + H(+). Its function is as follows. Specifically methylates the N4 position of cytidine in position 1402 (C1402) of 16S rRNA. This Koribacter versatilis (strain Ellin345) protein is Ribosomal RNA small subunit methyltransferase H.